The primary structure comprises 482 residues: Reduced viability upon starvation protein 167 (482 aa).

Ser-2 bears the N-acetylserine mark. The region spanning 17 to 254 is the BAR domain; sequence FRQKFKMGEQ…YFDLNSDIVE (238 aa). 2 coiled-coil regions span residues 31–64 and 174–204; these read VYED…NGML and AKDE…LKTQ. Residue Lys-242 forms a Glycyl lysine isopeptide (Lys-Gly) (interchain with G-Cter in ubiquitin) linkage. Phosphoserine; by FUS3 and PHO85 occurs at positions 299, 321, and 379. Residues 382–407 form a disordered region; that stretch reads LTGLGFQQSPQQQQGPPPAYSNPLTS. An SH3 domain is found at 421-482; it reads PGVETVTALY…PGNYVQLNKN (62 aa). Lys-481 participates in a covalent cross-link: Glycyl lysine isopeptide (Lys-Gly) (interchain with G-Cter in ubiquitin).

Binds to actin. Interacts with ABP1, GYL1, GYP5, PCL2 and YBR108W. Post-translationally, phosphorylated redundantly by cyclin-dependent kinase PHO85 in association with PCL1,2-type cyclins or by MAP kinase FUS3. Phosphorylation inhibits interaction with complexes involved in actin cytoskeleton function.

The protein resides in the cytoplasm. It is found in the cytoskeleton. Functionally, component of a cytoskeletal structure that is required for the formation of endocytic vesicles at the plasma membrane level. Could be implicated in cytoskeletal reorganization in response to environmental stresses and could act in the budding site selection mechanism. This chain is Reduced viability upon starvation protein 167 (RVS167), found in Saccharomyces cerevisiae (strain ATCC 204508 / S288c) (Baker's yeast).